Reading from the N-terminus, the 80-residue chain is Exodeoxyribonuclease 7 small subunit (80 aa).

The protein belongs to the XseB family. In terms of assembly, heterooligomer composed of large and small subunits.

The protein resides in the cytoplasm. It carries out the reaction Exonucleolytic cleavage in either 5'- to 3'- or 3'- to 5'-direction to yield nucleoside 5'-phosphates.. Its function is as follows. Bidirectionally degrades single-stranded DNA into large acid-insoluble oligonucleotides, which are then degraded further into small acid-soluble oligonucleotides. This chain is Exodeoxyribonuclease 7 small subunit, found in Marinomonas sp. (strain MWYL1).